Reading from the N-terminus, the 474-residue chain is Ribulose bisphosphate carboxylase large chain (474 aa).

K13 is modified (N6,N6,N6-trimethyllysine). Residues N122 and T172 each contribute to the substrate site. K174 serves as the catalytic Proton acceptor. Position 176 (K176) interacts with substrate. K200, D202, and E203 together coordinate Mg(2+). K200 is subject to N6-carboxylysine. H293 serves as the catalytic Proton acceptor. Positions 294, 326, and 378 each coordinate substrate.

This sequence belongs to the RuBisCO large chain family. Type I subfamily. As to quaternary structure, heterohexadecamer of 8 large chains and 8 small chains; disulfide-linked. The disulfide link is formed within the large subunit homodimers. Mg(2+) is required as a cofactor. The disulfide bond which can form in the large chain dimeric partners within the hexadecamer appears to be associated with oxidative stress and protein turnover.

Its subcellular location is the plastid. It is found in the chloroplast. The enzyme catalyses 2 (2R)-3-phosphoglycerate + 2 H(+) = D-ribulose 1,5-bisphosphate + CO2 + H2O. It carries out the reaction D-ribulose 1,5-bisphosphate + O2 = 2-phosphoglycolate + (2R)-3-phosphoglycerate + 2 H(+). In terms of biological role, ruBisCO catalyzes two reactions: the carboxylation of D-ribulose 1,5-bisphosphate, the primary event in carbon dioxide fixation, as well as the oxidative fragmentation of the pentose substrate in the photorespiration process. Both reactions occur simultaneously and in competition at the same active site. In Dendrophthora clavata (Columbian mistletoe), this protein is Ribulose bisphosphate carboxylase large chain.